Here is a 982-residue protein sequence, read N- to C-terminus: Glutamate [NMDA] receptor subunit 1 (982 aa).

Residues 1–22 (MRVAFIYRWLLCGAAIVNVLVA) form the signal peptide. Over 23–568 (QRHTASDNPS…TLVSFLQPFS (546 aa)) the chain is Extracellular. 7 N-linked (GlcNAc...) asparagine glycosylation sites follow: asparagine 253, asparagine 309, asparagine 340, asparagine 392, asparagine 449, asparagine 476, and asparagine 496. Glycine is bound by residues 525–527 (PLT) and arginine 532. A helical transmembrane segment spans residues 569 to 589 (NTLWILVMVSVHVVALVLYLL). Residues 590–646 (DRFSPFGRFKLSHSDSNEEKALNLSSAVWFAWGVLLNSGIGEGTPRSFSARVLGMVW) are Cytoplasmic-facing. Residues 647-667 (AGFAMIIVASYTANLAAFLVL) form a helical membrane-spanning segment. The Extracellular segment spans residues 668–826 (ERPKTKLSGI…KTPNTLGLKN (159 aa)). Residue asparagine 688 is glycosylated (N-linked (GlcNAc...) asparagine). 2 residues coordinate glycine: serine 698 and aspartate 742. Residues 827 to 847 (MAGVFILVGVGIAGGVGLIII) traverse the membrane as a helical segment. The Cytoplasmic segment spans residues 848–982 (EVIYKKHQVK…YTSDVSHLVV (135 aa)). Residues 948 to 982 (LTASQLGLGKTRPQQNPLPPRYSPGYTSDVSHLVV) form a disordered region. A compositionally biased stretch (polar residues) spans 972–982 (GYTSDVSHLVV).

Belongs to the glutamate-gated ion channel (TC 1.A.10.1) family. In terms of assembly, forms a heteromeric NMDA channel with Nmdar2.

The protein localises to the cell membrane. Its subcellular location is the postsynaptic cell membrane. The protein resides in the postsynaptic density. Its function is as follows. NMDA receptor subtype of glutamate-gated ion channels with high calcium permeability and voltage-dependent sensitivity to magnesium. Mediated by glycine. This protein plays a key role in synaptic plasticity, synaptogenesis, excitotoxicity, memory acquisition and learning. It mediates neuronal functions in glutamate neurotransmission. Is involved in the cell surface targeting of NMDA receptors. Plays a role in associative learning and in long-term memory consolidation. The sequence is that of Glutamate [NMDA] receptor subunit 1 from Drosophila grimshawi (Hawaiian fruit fly).